We begin with the raw amino-acid sequence, 585 residues long: Beta-(1--&gt;2)glucan export ATP-binding/permease protein NdvA (585 aa).

Residues V21 to E301 form the ABC transmembrane type-1 domain. 6 consecutive transmembrane segments (helical) span residues G22–F42, V55–L75, Q136–V156, L158–S178, L245–V265, and E269–L289. Residues V335 to A569 form the ABC transporter domain. An ATP-binding site is contributed by G368–T375.

The protein belongs to the ABC transporter superfamily. Beta-(1--&gt;2)glucan exporter (TC 3.A.1.108.1) family. Homodimer.

The protein resides in the cell inner membrane. It carries out the reaction [(1-&gt;2)-beta-D-glucosyl](n)(in) + ATP + H2O = [(1-&gt;2)-beta-D-glucosyl](n)(out) + ADP + phosphate + H(+). Involved in beta-(1--&gt;2)glucan export which is required for nodulation of legume roots. May be involved in other classes of oligosaccharides export. Transmembrane domains (TMD) form a pore in the inner membrane and the ATP-binding domain (NBD) is responsible for energy generation. The protein is Beta-(1--&gt;2)glucan export ATP-binding/permease protein NdvA of Rhizobium meliloti (strain 1021) (Ensifer meliloti).